The chain runs to 387 residues: Type 2 DNA topoisomerase 6 subunit A (387 aa).

The 149-residue stretch at E12 to K160 folds into the Topo IIA-type catalytic domain. Residue Y106 is the O-(5'-phospho-DNA)-tyrosine intermediate of the active site. Positions 207 and 259 each coordinate Mg(2+).

It belongs to the TOP6A family. Homodimer. Heterotetramer of two Top6A and two Top6B chains. Mg(2+) is required as a cofactor.

It carries out the reaction ATP-dependent breakage, passage and rejoining of double-stranded DNA.. Relaxes both positive and negative superturns and exhibits a strong decatenase activity. This chain is Type 2 DNA topoisomerase 6 subunit A, found in Hyperthermus butylicus (strain DSM 5456 / JCM 9403 / PLM1-5).